A 363-amino-acid polypeptide reads, in one-letter code: FMNH(2)-dependent dimethylsulfone monooxygenase (363 aa).

It belongs to the SsuD family.

The catalysed reaction is dimethyl sulfone + FMNH2 + O2 = methanesulfinate + FMN + formaldehyde + H2O + 2 H(+). Functionally, involved in the dimethyl sulfide degradation pathway. Catalyzes the oxidation of dimethylsulfone (DMSO2) to yield methanesulfinate, which is oxidized spontaneously to methanesulfonate in the presence of dioxygen and FMNH(2). This is FMNH(2)-dependent dimethylsulfone monooxygenase from Pseudomonas putida (Arthrobacter siderocapsulatus).